Reading from the N-terminus, the 164-residue chain is MIITLARVDDRLIHGQVTTVWSKESNADRIIIVSSEVYKDDIRKTLLKQAAPPGMKVNIVDVPKAIAVYNNPKYQNEKVFYLFTNPREVVDLVKGGIPLEKLNIGGMQFKQGKTQISKAVSLDADDVAAFRELHQLGVKLDLRVVKTDPSSDILAKIDEVFGKE.

In terms of domain architecture, PTS EIIB type-4 spans 1-164 (MIITLARVDD…AKIDEVFGKE (164 aa)). The active-site Pros-phosphohistidine intermediate is His-14. His-14 carries the phosphohistidine; by EIIA modification.

Its subcellular location is the cytoplasm. The enzyme catalyses keto-L-sorbose(out) + N(pros)-phospho-L-histidyl-[protein] = L-sorbose 1-phosphate(in) + L-histidyl-[protein]. Functionally, the phosphoenolpyruvate-dependent sugar phosphotransferase system (PTS), a major carbohydrate active transport system, catalyzes the phosphorylation of incoming sugar substrates concomitant with their translocation across the cell membrane. The enzyme II SorABCD PTS system is involved in L-sorbose transport. The protein is PTS system sorbose-specific EIIB component of Lacticaseibacillus casei (Lactobacillus casei).